We begin with the raw amino-acid sequence, 554 residues long: Glutamine--tRNA ligase (554 aa).

The 'HIGH' region signature appears at 34–44 (PEPNGYLHIGH). Residues 35–37 (EPN) and 41–47 (HIGHAKS) contribute to the ATP site. L-glutamine contacts are provided by aspartate 67 and tyrosine 212. Residues threonine 231, 261-262 (RL), and 269-271 (MSK) contribute to the ATP site. The 'KMSKS' region motif lies at 268–272 (VMSKR). Positions 317–324 (TKQDNTIE) are interaction with tRNA.

This sequence belongs to the class-I aminoacyl-tRNA synthetase family. Monomer.

Its subcellular location is the cytoplasm. It carries out the reaction tRNA(Gln) + L-glutamine + ATP = L-glutaminyl-tRNA(Gln) + AMP + diphosphate. The chain is Glutamine--tRNA ligase from Shigella flexneri serotype 5b (strain 8401).